Reading from the N-terminus, the 137-residue chain is NADH-quinone oxidoreductase subunit A (137 aa).

A run of 3 helical transmembrane segments spans residues 12–32 (WGFA…LGVS), 66–86 (FYLV…LFAW), and 96–116 (TGFV…VYLF).

The protein belongs to the complex I subunit 3 family. NDH-1 is composed of 13 different subunits. Subunits NuoA, H, J, K, L, M, N constitute the membrane sector of the complex.

It localises to the cell inner membrane. It catalyses the reaction a quinone + NADH + 5 H(+)(in) = a quinol + NAD(+) + 4 H(+)(out). NDH-1 shuttles electrons from NADH, via FMN and iron-sulfur (Fe-S) centers, to quinones in the respiratory chain. The immediate electron acceptor for the enzyme in this species is believed to be ubiquinone. Couples the redox reaction to proton translocation (for every two electrons transferred, four hydrogen ions are translocated across the cytoplasmic membrane), and thus conserves the redox energy in a proton gradient. In Pseudomonas fluorescens (strain Pf0-1), this protein is NADH-quinone oxidoreductase subunit A.